Reading from the N-terminus, the 62-residue chain is Small ribosomal subunit protein bS21 (62 aa).

A compositionally biased stretch (basic and acidic residues) spans 40–52 (KPSVKRKLKSEAA). The disordered stretch occupies residues 40–62 (KPSVKRKLKSEAARKRKNKRRRY). A compositionally biased stretch (basic residues) spans 53–62 (RKRKNKRRRY).

It belongs to the bacterial ribosomal protein bS21 family.

This is Small ribosomal subunit protein bS21 from Limosilactobacillus fermentum (strain NBRC 3956 / LMG 18251) (Lactobacillus fermentum).